The following is a 979-amino-acid chain: Zinc finger protein 280D (979 aa).

Residues K32, K34, K74, and K87 each participate in a glycyl lysine isopeptide (Lys-Gly) (interchain with G-Cter in SUMO2) cross-link. Over residues 89 to 101 the composition is skewed to polar residues; that stretch reads TSQHYTNPTSNPV. Positions 89-119 are disordered; that stretch reads TSQHYTNPTSNPVPASPINFHPESRSSDSSV. S104 is modified (phosphoserine). Residues K126 and K140 each participate in a glycyl lysine isopeptide (Lys-Gly) (interchain with G-Cter in SUMO2) cross-link. The tract at residues 157 to 236 is disordered; that stretch reads YQGGPTLSMA…TSSNQSKNGT (80 aa). Over residues 169–187 the composition is skewed to polar residues; the sequence is SESSFLSKRPSTSEVNNVN. Residues K189, K210, K223, K233, K275, K284, and K292 each participate in a glycyl lysine isopeptide (Lys-Gly) (interchain with G-Cter in SUMO2) cross-link. Positions 195–235 are enriched in polar residues; it reads ESVSGANSSAVLPSVKSPSVTSSQAMLAKGTNTSSNQSKNG. 2 consecutive C2H2-type zinc fingers follow at residues 321-343 and 358-381; these read FKCFSCLKILKNNIRFMNHMKHH and TTCQHCYRQFPTPFQLQCHIESTH. A C2H2-type 3; degenerate zinc finger spans residues 388-412; the sequence is TICKICELSFETEHVLLQHMKDNHK. 2 consecutive C2H2-type zinc fingers follow at residues 418 to 441 and 449 to 469; these read YVCQVCNYRSSSFSDVETHFRTSH and CPFCLKVIKIATPYMHHYMKH. Disordered stretches follow at residues 523 to 608, 739 to 809, and 896 to 979; these read GPLQ…NKKS, LKKE…SDKE, and FLRK…KERS. Residues 527–541 are compositionally biased toward low complexity; that stretch reads SGASPTPSISASAST. Polar residues-rich tracts occupy residues 542-584 and 592-608; these read LQLS…NGSK and SNMQKKQSTLASSNKKS. Position 545 is a phosphoserine (S545). Residue K550 forms a Glycyl lysine isopeptide (Lys-Gly) (interchain with G-Cter in SUMO2) linkage. Residues 739-784 are compositionally biased toward basic and acidic residues; it reads LKKEAPAKEQEPVSKEIARPNMAERETETSNSESKQDKAASSKEKN. K740 participates in a covalent cross-link: Glycyl lysine isopeptide (Lys-Gly) (interchain with G-Cter in SUMO2). Residues 786–797 are compositionally biased toward polar residues; that stretch reads CNANSFEGSSTT. Over residues 798–809 the composition is skewed to basic and acidic residues; sequence KSEESITVSDKE. The segment covering 905-914 has biased composition (polar residues); sequence SVSSDVSEQG. 2 positions are modified to phosphoserine: S908 and S911. Acidic residues predominate over residues 970-979; the sequence is VDLEDEKERS. A Glycyl lysine isopeptide (Lys-Gly) (interchain with G-Cter in SUMO2) cross-link involves residue K976.

It localises to the nucleus. Functionally, may function as a transcription factor. This chain is Zinc finger protein 280D (ZNF280D), found in Homo sapiens (Human).